The following is a 203-amino-acid chain: Nascent polypeptide-associated complex subunit alpha (203 aa).

A compositionally biased stretch (basic and acidic residues) spans 1–19; that stretch reads MADPRIEELPDEEVPKTNV. A disordered region spans residues 1–45; that stretch reads MADPRIEELPDEEVPKTNVEDAADSSESEAGEEPTIPGGAAVTIH. Residues 21 to 32 are compositionally biased toward acidic residues; it reads DAADSSESEAGE. An NAC-A/B domain is found at 46–111; it reads SRNEKKARKA…AKIEDLNSQA (66 aa). The interval 118–167 is disordered; that stretch reads QLAAAEAAGEHAGHDHDHDKGKGKAPETEAKKEEEEDDGEEVDETGLEPK. A compositionally biased stretch (basic and acidic residues) spans 125 to 150; the sequence is AGEHAGHDHDHDKGKGKAPETEAKKE. The span at 151 to 163 shows a compositional bias: acidic residues; that stretch reads EEEDDGEEVDETG. The 40-residue stretch at 164 to 203 folds into the UBA domain; that stretch reads LEPKDIDLVMAQANVSRKKAVKALRENDNDIVNSIMALSI.

Belongs to the NAC-alpha family. Part of the nascent polypeptide-associated complex (NAC), consisting of egd2 and egd1. NAC associates with ribosomes via egd1.

It is found in the cytoplasm. Its subcellular location is the nucleus. Its function is as follows. Component of the nascent polypeptide-associated complex (NAC), a dynamic component of the ribosomal exit tunnel, protecting the emerging polypeptides from interaction with other cytoplasmic proteins to ensure appropriate nascent protein targeting. The NAC complex also promotes mitochondrial protein import by enhancing productive ribosome interactions with the outer mitochondrial membrane and blocks the inappropriate interaction of ribosomes translating non-secretory nascent polypeptides with translocation sites in the membrane of the endoplasmic reticulum. Egd2 may also be involved in transcription regulation. The sequence is that of Nascent polypeptide-associated complex subunit alpha (egd2) from Emericella nidulans (strain FGSC A4 / ATCC 38163 / CBS 112.46 / NRRL 194 / M139) (Aspergillus nidulans).